Here is a 473-residue protein sequence, read N- to C-terminus: G2/mitotic-specific cyclin-1 (473 aa).

Polar residues predominate over residues 1–12 (MGSRNIVQQQNR). Disordered regions lie at residues 1-23 (MGSR…AMKQ) and 134-155 (KEKP…APTL). The span at 134-147 (KEKPIEKEKAAEKS) shows a compositional bias: basic and acidic residues.

It belongs to the cyclin family. Cyclin AB subfamily. In terms of assembly, interacts with the CDC2 and CDK2 protein kinases to form a serine/threonine kinase holoenzyme complex. The cyclin subunit imparts substrate specificity to the complex.

Functionally, essential for the control of the cell cycle at the G2/M (mitosis) transition. G2/M cyclins accumulate steadily during G2 and are abruptly destroyed at mitosis. This is G2/mitotic-specific cyclin-1 from Antirrhinum majus (Garden snapdragon).